Consider the following 272-residue polypeptide: Formamidopyrimidine-DNA glycosylase (272 aa).

The Schiff-base intermediate with DNA role is filled by Pro2. The active-site Proton donor is Glu3. Lys57 acts as the Proton donor; for beta-elimination activity in catalysis. DNA-binding residues include His90, Arg109, and Lys150. The segment at 235 to 269 (HVYGRAKKKCLLCSSIIQEEKIGQRNTFWCGHCQP) adopts an FPG-type zinc-finger fold. The Proton donor; for delta-elimination activity role is filled by Arg259.

The protein belongs to the FPG family. As to quaternary structure, monomer. It depends on Zn(2+) as a cofactor.

The enzyme catalyses Hydrolysis of DNA containing ring-opened 7-methylguanine residues, releasing 2,6-diamino-4-hydroxy-5-(N-methyl)formamidopyrimidine.. The catalysed reaction is 2'-deoxyribonucleotide-(2'-deoxyribose 5'-phosphate)-2'-deoxyribonucleotide-DNA = a 3'-end 2'-deoxyribonucleotide-(2,3-dehydro-2,3-deoxyribose 5'-phosphate)-DNA + a 5'-end 5'-phospho-2'-deoxyribonucleoside-DNA + H(+). In terms of biological role, involved in base excision repair of DNA damaged by oxidation or by mutagenic agents. Acts as a DNA glycosylase that recognizes and removes damaged bases. Has a preference for oxidized purines, such as 7,8-dihydro-8-oxoguanine (8-oxoG). Has AP (apurinic/apyrimidinic) lyase activity and introduces nicks in the DNA strand. Cleaves the DNA backbone by beta-delta elimination to generate a single-strand break at the site of the removed base with both 3'- and 5'-phosphates. The polypeptide is Formamidopyrimidine-DNA glycosylase (Aliivibrio fischeri (strain ATCC 700601 / ES114) (Vibrio fischeri)).